Consider the following 116-residue polypeptide: NADH-ubiquinone oxidoreductase chain 3 (116 aa).

The next 3 membrane-spanning stretches (helical) occupy residues 3–23, 56–76, and 87–107; these read LITTIITITITLSAVLATISF, FFLIAILFLLFDLEIALLLPL, and LTLIWSTAVLALLTLGLIYEW.

It belongs to the complex I subunit 3 family.

It is found in the mitochondrion membrane. It carries out the reaction a ubiquinone + NADH + 5 H(+)(in) = a ubiquinol + NAD(+) + 4 H(+)(out). Core subunit of the mitochondrial membrane respiratory chain NADH dehydrogenase (Complex I) that is believed to belong to the minimal assembly required for catalysis. Complex I functions in the transfer of electrons from NADH to the respiratory chain. The immediate electron acceptor for the enzyme is believed to be ubiquinone. This chain is NADH-ubiquinone oxidoreductase chain 3 (MT-ND3), found in Oncorhynchus keta (Chum salmon).